Here is a 432-residue protein sequence, read N- to C-terminus: Probable rhamnogalacturonase E (432 aa).

The signal sequence occupies residues 1-21; that stretch reads MQSKTFSVLSSCLLLIATVQG. A disulfide bridge links cysteine 42 with cysteine 68. 3 N-linked (GlcNAc...) asparagine glycosylation sites follow: asparagine 53, asparagine 91, and asparagine 106. The Proton donor role is filled by aspartate 221. A disulfide bond links cysteine 223 and cysteine 240. Asparagine 241 and asparagine 256 each carry an N-linked (GlcNAc...) asparagine glycan. The active site involves histidine 296. 2 cysteine pairs are disulfide-bonded: cysteine 329–cysteine 335 and cysteine 357–cysteine 366.

This sequence belongs to the glycosyl hydrolase 28 family.

The protein resides in the secreted. In terms of biological role, pectinolytic enzymes consist of four classes of enzymes: pectine lyase, polygalacturonase, pectin methylesterase and rhamnogalacturonase. Hydrolyzes alpha-D-galacturonopyranosyl-(1,2)-alpha-L-rhamnopyranosyl linkages in the backbone of the hairy regions of pectins. This Aspergillus oryzae (strain ATCC 42149 / RIB 40) (Yellow koji mold) protein is Probable rhamnogalacturonase E (rhgE).